Consider the following 68-residue polypeptide: Large ribosomal subunit protein bL31 (68 aa).

Zn(2+)-binding residues include Cys17, Cys19, Cys37, and Cys40.

The protein belongs to the bacterial ribosomal protein bL31 family. Type A subfamily. As to quaternary structure, part of the 50S ribosomal subunit. Zn(2+) serves as cofactor.

Binds the 23S rRNA. The protein is Large ribosomal subunit protein bL31 of Dehalococcoides mccartyi (strain ATCC BAA-2266 / KCTC 15142 / 195) (Dehalococcoides ethenogenes (strain 195)).